The sequence spans 143 residues: Flagellar assembly factor FliW (143 aa).

The protein belongs to the FliW family. As to quaternary structure, interacts with translational regulator CsrA and flagellin(s).

It is found in the cytoplasm. In terms of biological role, acts as an anti-CsrA protein, binds CsrA and prevents it from repressing translation of its target genes, one of which is flagellin. Binds to flagellin and participates in the assembly of the flagellum. This is Flagellar assembly factor FliW from Clostridium botulinum (strain 657 / Type Ba4).